Consider the following 486-residue polypeptide: Cardiolipin synthase A (486 aa).

2 helical membrane-spanning segments follow: residues 3 to 23 (IFYN…IANI) and 38 to 58 (MSWL…WFFF). 2 consecutive PLD phosphodiesterase domains span residues 219–246 (VDVR…VDPY) and 399–426 (QKGL…DMRS). Catalysis depends on residues His224, Lys226, Asp231, His404, Lys406, and Asp411.

Belongs to the phospholipase D family. Cardiolipin synthase subfamily. ClsA sub-subfamily.

Its subcellular location is the cell inner membrane. The enzyme catalyses 2 a 1,2-diacyl-sn-glycero-3-phospho-(1'-sn-glycerol) = a cardiolipin + glycerol. Its function is as follows. Catalyzes the reversible phosphatidyl group transfer from one phosphatidylglycerol molecule to another to form cardiolipin (CL) (diphosphatidylglycerol) and glycerol. The sequence is that of Cardiolipin synthase A from Buchnera aphidicola subsp. Acyrthosiphon pisum (strain APS) (Acyrthosiphon pisum symbiotic bacterium).